The sequence spans 204 residues: Flavin-dependent thymidylate synthase (204 aa).

A ThyX domain is found at 1-204; the sequence is MTVTLMQHTS…RYLFCLNQEG (204 aa). FAD-binding positions include Ser50 and 74–76; that span reads RHR. DUMP is bound by residues 71–74, 84–86, and Lys143; these read ELAR and SSR. The ThyX motif motif lies at 74-84; sequence RHRIASLSVKS. Residues 159–161 and Asn165 contribute to the FAD site; that span reads NAR. DUMP is bound at residue Arg170. Residue Arg170 is the Involved in ionization of N3 of dUMP, leading to its activation of the active site.

Belongs to the thymidylate synthase ThyX family. Homotetramer. The cofactor is FAD.

The enzyme catalyses dUMP + (6R)-5,10-methylene-5,6,7,8-tetrahydrofolate + NADPH + H(+) = dTMP + (6S)-5,6,7,8-tetrahydrofolate + NADP(+). It participates in pyrimidine metabolism; dTTP biosynthesis. Functionally, catalyzes the reductive methylation of 2'-deoxyuridine-5'-monophosphate (dUMP) to 2'-deoxythymidine-5'-monophosphate (dTMP) while utilizing 5,10-methylenetetrahydrofolate (mTHF) as the methyl donor, and NADPH and FADH(2) as the reductant. This is Flavin-dependent thymidylate synthase from Wolinella succinogenes (strain ATCC 29543 / DSM 1740 / CCUG 13145 / JCM 31913 / LMG 7466 / NCTC 11488 / FDC 602W) (Vibrio succinogenes).